The following is a 753-amino-acid chain: 5-methyltetrahydropteroyltriglutamate--homocysteine methyltransferase (753 aa).

5-methyltetrahydropteroyltri-L-glutamate contacts are provided by residues 19–22 and Arg113; that span reads RELK. Residues 430 to 432 and Glu483 contribute to the L-homocysteine site; that span reads IGS. L-methionine-binding positions include 430 to 432 and Glu483; that span reads IGS. Residues 514–515 and Trp560 each bind 5-methyltetrahydropteroyltri-L-glutamate; that span reads RC. Asp598 provides a ligand contact to L-homocysteine. Residue Asp598 participates in L-methionine binding. Residue Glu604 participates in 5-methyltetrahydropteroyltri-L-glutamate binding. Residues His640, Cys642, and Glu664 each contribute to the Zn(2+) site. The active-site Proton donor is the His693. A Zn(2+)-binding site is contributed by Cys725.

Belongs to the vitamin-B12 independent methionine synthase family. It depends on Zn(2+) as a cofactor.

It catalyses the reaction 5-methyltetrahydropteroyltri-L-glutamate + L-homocysteine = tetrahydropteroyltri-L-glutamate + L-methionine. It participates in amino-acid biosynthesis; L-methionine biosynthesis via de novo pathway; L-methionine from L-homocysteine (MetE route): step 1/1. Catalyzes the transfer of a methyl group from 5-methyltetrahydrofolate to homocysteine resulting in methionine formation. The polypeptide is 5-methyltetrahydropteroyltriglutamate--homocysteine methyltransferase (Rhodococcus jostii (strain RHA1)).